The sequence spans 214 residues: MKILVTGFNPFGGEKINPALEAVKLLPSEINGAEVRWVEIPTVFYKSSEVLEAEILRYQPDAVLCIGQAGGRTGLTPERVAINQDDARIPDNEGNQPIDTPIRIDGASAYFSSLPIKAMVQAIKKQGLPAVVSNSAGTFVCNHLMYQALYLVDKKFPNMRAGFMHIPYMMEQVVNKPNTAGMSLCDIVRGIEVAIEAIVDYKDKDLQLVGGETH.

Catalysis depends on residues glutamate 78, cysteine 141, and histidine 165.

Belongs to the peptidase C15 family. In terms of assembly, homotetramer.

The protein localises to the cytoplasm. It carries out the reaction Release of an N-terminal pyroglutamyl group from a polypeptide, the second amino acid generally not being Pro.. Functionally, removes 5-oxoproline from various penultimate amino acid residues except L-proline. This chain is Pyrrolidone-carboxylate peptidase, found in Streptococcus pneumoniae serotype 2 (strain D39 / NCTC 7466).